Reading from the N-terminus, the 430-residue chain is Adenylosuccinate synthetase (430 aa).

GTP-binding positions include 12–18 and 40–42; these read GDEGKGK and GHT. The active-site Proton acceptor is the D13. 2 residues coordinate Mg(2+): D13 and G40. IMP is bound by residues 13–16, 38–41, T130, R144, Q225, T240, and R304; these read DEGK and NAGH. H41 (proton donor) is an active-site residue. 300-306 lines the substrate pocket; the sequence is STTGRPR. GTP contacts are provided by residues R306, 332–334, and 414–416; these read KLD and SVG.

Belongs to the adenylosuccinate synthetase family. As to quaternary structure, homodimer. It depends on Mg(2+) as a cofactor.

The protein resides in the cytoplasm. It catalyses the reaction IMP + L-aspartate + GTP = N(6)-(1,2-dicarboxyethyl)-AMP + GDP + phosphate + 2 H(+). Its pathway is purine metabolism; AMP biosynthesis via de novo pathway; AMP from IMP: step 1/2. Its function is as follows. Plays an important role in the de novo pathway of purine nucleotide biosynthesis. Catalyzes the first committed step in the biosynthesis of AMP from IMP. The protein is Adenylosuccinate synthetase of Pelobacter propionicus (strain DSM 2379 / NBRC 103807 / OttBd1).